Reading from the N-terminus, the 141-residue chain is Small ribosomal subunit protein uS12 (141 aa).

Positions 118 to 141 are disordered; sequence TGVDKRRQQRSAYGAKRPKADKKK.

Belongs to the universal ribosomal protein uS12 family. Part of the 30S ribosomal subunit. Contacts proteins S8 and S17. May interact with IF1 in the 30S initiation complex.

In terms of biological role, with S4 and S5 plays an important role in translational accuracy. Its function is as follows. Interacts with and stabilizes bases of the 16S rRNA that are involved in tRNA selection in the A site and with the mRNA backbone. Located at the interface of the 30S and 50S subunits, it traverses the body of the 30S subunit contacting proteins on the other side and probably holding the rRNA structure together. The combined cluster of proteins S8, S12 and S17 appears to hold together the shoulder and platform of the 30S subunit. This chain is Small ribosomal subunit protein uS12, found in Mycoplasmoides gallisepticum (strain R(low / passage 15 / clone 2)) (Mycoplasma gallisepticum).